The following is a 101-amino-acid chain: Small ribosomal subunit protein uS14 (101 aa).

The protein belongs to the universal ribosomal protein uS14 family. Part of the 30S ribosomal subunit. Contacts proteins S3 and S10.

In terms of biological role, binds 16S rRNA, required for the assembly of 30S particles and may also be responsible for determining the conformation of the 16S rRNA at the A site. This chain is Small ribosomal subunit protein uS14, found in Caulobacter sp. (strain K31).